The primary structure comprises 449 residues: Probable magnetosome protein Mms48 (449 aa).

The signal sequence occupies residues 1–18 (MLLRLIVLLIFMSPVVFA). The helical transmembrane segment at 40-60 (SNMPVLLAVILVVFLIFSALS) threads the bilayer. A TPR repeat occupies 323 to 356 (PDGHLAAGEAAFAVQKWGVARRHIMAALKIAPDA).

Its subcellular location is the magnetosome membrane. Its function is as follows. Overexpression in wild-type cells increases the number of cells with double magnetosome chains significantly. The 4 genes of this operon collectively influence magnetosome size and number. The sequence is that of Probable magnetosome protein Mms48 from Magnetospirillum gryphiswaldense (strain DSM 6361 / JCM 21280 / NBRC 15271 / MSR-1).